Consider the following 298-residue polypeptide: ATP synthase gamma chain (298 aa).

The protein belongs to the ATPase gamma chain family. As to quaternary structure, F-type ATPases have 2 components, CF(1) - the catalytic core - and CF(0) - the membrane proton channel. CF(1) has five subunits: alpha(3), beta(3), gamma(1), delta(1), epsilon(1). CF(0) has three main subunits: a, b and c.

It is found in the cell membrane. Produces ATP from ADP in the presence of a proton gradient across the membrane. The gamma chain is believed to be important in regulating ATPase activity and the flow of protons through the CF(0) complex. This Mycobacterium leprae (strain Br4923) protein is ATP synthase gamma chain.